Consider the following 418-residue polypeptide: Serine hydroxymethyltransferase (418 aa).

(6S)-5,6,7,8-tetrahydrofolate is bound by residues Leu121 and 125-127 (GHL). N6-(pyridoxal phosphate)lysine is present on Lys230. (6S)-5,6,7,8-tetrahydrofolate contacts are provided by residues Glu246 and 355–357 (SPF).

It belongs to the SHMT family. As to quaternary structure, homodimer. Requires pyridoxal 5'-phosphate as cofactor.

The protein resides in the cytoplasm. The catalysed reaction is (6R)-5,10-methylene-5,6,7,8-tetrahydrofolate + glycine + H2O = (6S)-5,6,7,8-tetrahydrofolate + L-serine. It participates in one-carbon metabolism; tetrahydrofolate interconversion. Its pathway is amino-acid biosynthesis; glycine biosynthesis; glycine from L-serine: step 1/1. Catalyzes the reversible interconversion of serine and glycine with tetrahydrofolate (THF) serving as the one-carbon carrier. This reaction serves as the major source of one-carbon groups required for the biosynthesis of purines, thymidylate, methionine, and other important biomolecules. Also exhibits THF-independent aldolase activity toward beta-hydroxyamino acids, producing glycine and aldehydes, via a retro-aldol mechanism. This chain is Serine hydroxymethyltransferase, found in Streptococcus pneumoniae serotype 4 (strain ATCC BAA-334 / TIGR4).